The primary structure comprises 172 residues: Adenine phosphoribosyltransferase (172 aa).

Belongs to the purine/pyrimidine phosphoribosyltransferase family. As to quaternary structure, homodimer.

The protein resides in the cytoplasm. The catalysed reaction is AMP + diphosphate = 5-phospho-alpha-D-ribose 1-diphosphate + adenine. It participates in purine metabolism; AMP biosynthesis via salvage pathway; AMP from adenine: step 1/1. Functionally, catalyzes a salvage reaction resulting in the formation of AMP, that is energically less costly than de novo synthesis. The protein is Adenine phosphoribosyltransferase of Methanococcus maripaludis (strain C5 / ATCC BAA-1333).